A 443-amino-acid chain; its full sequence is Enolase B (443 aa).

Positions 156 and 165 each coordinate substrate. The active-site Proton donor is glutamate 208. Residues aspartate 243, glutamate 296, and aspartate 323 each coordinate Mg(2+). Positions 296 and 323 each coordinate substrate. The active-site Proton acceptor is the lysine 348. Residues 375 to 378 (SHRS) and lysine 399 contribute to the substrate site.

This sequence belongs to the enolase family. Homodimer. The cofactor is Mg(2+).

It is found in the cytoplasm. The enzyme catalyses (2R)-2-phosphoglycerate = phosphoenolpyruvate + H2O. Its pathway is carbohydrate degradation; glycolysis; pyruvate from D-glyceraldehyde 3-phosphate: step 4/5. The protein is Enolase B (enoB) of Dictyostelium discoideum (Social amoeba).